Consider the following 243-residue polypeptide: Ribosomal RNA small subunit methyltransferase G (243 aa).

Residues G79, F84, 130 to 131, and R150 each bind S-adenosyl-L-methionine; that span reads AE. The interval 219 to 243 is disordered; sequence EKKKQTPNKYPRKPGTPGKDPIGKK.

Belongs to the methyltransferase superfamily. RNA methyltransferase RsmG family.

It localises to the cytoplasm. Its function is as follows. Specifically methylates the N7 position of a guanine in 16S rRNA. This Pediococcus pentosaceus (strain ATCC 25745 / CCUG 21536 / LMG 10740 / 183-1w) protein is Ribosomal RNA small subunit methyltransferase G.